A 399-amino-acid polypeptide reads, in one-letter code: MASGKVRCTRKLRSWIVEQVESGHFPGVCWDDAAKTMFRIPWKHAGKQDFREDQDAAIFKAWALFKEKHKDGDIGHPAVWKTRLRCALNKSSEFEEVPERGRMDVAEPYKVYRILPAGTLPNQPRNQKSPCKRSISCVSPEREENMENGRTNGVVNHSDSGSNIGGGGNGSNRSDSNSNCNSELEEGAGTTEATIREDPVFLEHQLPLNSDYSLLLTFIYGGRVVGKTQVHSLDCRLVAERSDSESSMEQVEFPKPDPLEPTQHLLNQLDRGVLVASNSRGLFVQRLCPIPISWNAPEAPPGPGPHLLPSNKCVELFKTTYFCRDLAQYFQGQGPPPKFQATLHFWEESPGSSHSQENLITVQMEQAFARHLLEKIPEEEKAALFLLQHTEQSPSALGH.

A DNA-binding region (IRF tryptophan pentad repeat) is located at residues 9–116; the sequence is TRKLRSWIVE…EPYKVYRILP (108 aa). The segment at 118–189 is disordered; it reads GTLPNQPRNQ…CNSELEEGAG (72 aa). Over residues 120–129 the composition is skewed to polar residues; that stretch reads LPNQPRNQKS. S139 bears the Phosphoserine mark. The span at 148-157 shows a compositional bias: polar residues; that stretch reads NGRTNGVVNH. Positions 171-189 are enriched in low complexity; the sequence is SNRSDSNSNCNSELEEGAG. S393 bears the Phosphoserine mark.

The protein belongs to the IRF family. Interacts with STAT2 in the cytoplasm. Forms the interferon-stimulated gene factor 3 complex (ISGF3) with the heterodimer STAT1:STAT2; upon stimulation.

It is found in the nucleus. In terms of biological role, transcription factor that plays an essential role in anti-viral immunity. It mediates signaling by type I IFNs (IFN-alpha and IFN-beta). Following type I IFN binding to cell surface receptors, Jak kinases (TYK2 and JAK1) are activated, leading to tyrosine phosphorylation of STAT1 and STAT2. IRF9/ISGF3G associates with the phosphorylated STAT1:STAT2 dimer to form a complex termed ISGF3 transcription factor, that enters the nucleus. ISGF3 binds to the IFN stimulated response element (ISRE) to activate the transcription of interferon stimulated genes, which drive the cell in an antiviral state. The chain is Interferon regulatory factor 9 (Irf9) from Mus musculus (Mouse).